Here is a 200-residue protein sequence, read N- to C-terminus: Molybdenum cofactor guanylyltransferase (200 aa).

GTP-binding positions include 15–17 (LSG), Lys-28, Asp-74, and Asp-104. Asp-104 provides a ligand contact to Mg(2+).

It belongs to the MobA family. In terms of assembly, monomer. Mg(2+) serves as cofactor.

Its subcellular location is the cytoplasm. It carries out the reaction Mo-molybdopterin + GTP + H(+) = Mo-molybdopterin guanine dinucleotide + diphosphate. Transfers a GMP moiety from GTP to Mo-molybdopterin (Mo-MPT) cofactor (Moco or molybdenum cofactor) to form Mo-molybdopterin guanine dinucleotide (Mo-MGD) cofactor. This chain is Molybdenum cofactor guanylyltransferase, found in Pseudomonas fluorescens (strain SBW25).